A 401-amino-acid chain; its full sequence is 2-amino-3-carboxymuconate-6-semialdehyde decarboxylase (401 aa).

The Zn(2+) site is built by His18 and His20. Position 59 (Arg59) interacts with substrate. Zn(2+) is bound by residues His234 and Asp352.

Belongs to the metallo-dependent hydrolases superfamily. ACMSD family. As to quaternary structure, monomer.

It carries out the reaction 2-amino-3-carboxymuconate 6-semialdehyde + H(+) = 2-aminomuconate 6-semialdehyde + CO2. Its pathway is secondary metabolite metabolism; quinolate metabolism. Converts alpha-amino-beta-carboxymuconate-epsilon-semialdehyde (ACMS) to alpha-aminomuconate semialdehyde (AMS). The sequence is that of 2-amino-3-carboxymuconate-6-semialdehyde decarboxylase from Caenorhabditis elegans.